The primary structure comprises 214 residues: Probable transaldolase (214 aa).

The Schiff-base intermediate with substrate role is filled by Lys-83.

The protein belongs to the transaldolase family. Type 3B subfamily.

It localises to the cytoplasm. The enzyme catalyses D-sedoheptulose 7-phosphate + D-glyceraldehyde 3-phosphate = D-erythrose 4-phosphate + beta-D-fructose 6-phosphate. The protein operates within carbohydrate degradation; pentose phosphate pathway; D-glyceraldehyde 3-phosphate and beta-D-fructose 6-phosphate from D-ribose 5-phosphate and D-xylulose 5-phosphate (non-oxidative stage): step 2/3. In terms of biological role, transaldolase is important for the balance of metabolites in the pentose-phosphate pathway. The polypeptide is Probable transaldolase (Thermodesulfovibrio yellowstonii (strain ATCC 51303 / DSM 11347 / YP87)).